The sequence spans 575 residues: Alpha-(1,6)-fucosyltransferase (575 aa).

The Cytoplasmic segment spans residues 1–9; it reads MRAWTGSWR. Residues 10–30 form a helical; Signal-anchor for type II membrane protein membrane-spanning segment; sequence WIMLILFAWGTLLFYIGGHLV. Topologically, residues 31 to 575 are lumenal; it reads RDNDHPDHSS…KYPTYPEAEK (545 aa). 3 cysteine pairs are disulfide-bonded: cysteine 204-cysteine 266, cysteine 212-cysteine 230, and cysteine 218-cysteine 222. One can recognise a GT23 domain in the interval 206-493; that stretch reads KARKLVCNIN…PDASANFHSL (288 aa). At serine 278 the chain carries Phosphoserine. Positions 299–305 match the SH3-binding motif; sequence PRPPYLP. The important for donor substrate binding stretch occupies residues 365–366; that stretch reads RR. Residues cysteine 465 and cysteine 472 are joined by a disulfide bond. In terms of domain architecture, SH3 spans 502 to 563; it reads QNAHNQIAVY…PSYKVREKIE (62 aa).

Belongs to the glycosyltransferase 23 family. Post-translationally, tyrosine phosphorylated by PKDCC/VLK.

The protein resides in the golgi apparatus. It localises to the golgi stack membrane. It catalyses the reaction N(4)-{beta-D-GlcNAc-(1-&gt;2)-alpha-D-Man-(1-&gt;3)-[beta-D-GlcNAc-(1-&gt;2)-alpha-D-Man-(1-&gt;6)]-beta-D-Man-(1-&gt;4)-beta-D-GlcNAc-(1-&gt;4)-beta-D-GlcNAc}-L-asparaginyl-[protein] + GDP-beta-L-fucose = an N(4)-{beta-D-GlcNAc-(1-&gt;2)-alpha-D-Man-(1-&gt;3)-[beta-D-GlcNAc-(1-&gt;2)-alpha-D-Man-(1-&gt;6)]-beta-D-Man-(1-&gt;4)-beta-D-GlcNAc-(1-&gt;4)-[alpha-L-Fuc-(1-&gt;6)]-beta-D-GlcNAc}-L-asparaginyl-[protein] + GDP + H(+). It participates in protein modification; protein glycosylation. In terms of biological role, catalyzes the addition of fucose in alpha 1-6 linkage to the first GlcNAc residue, next to the peptide chains in N-glycans. This is Alpha-(1,6)-fucosyltransferase (Fut8) from Rattus norvegicus (Rat).